We begin with the raw amino-acid sequence, 496 residues long: Acyltransferase clz6 (496 aa).

The active-site Proton acceptor is the histidine 163.

Belongs to the plant acyltransferase family. In terms of assembly, monomer.

It participates in secondary metabolite biosynthesis. In terms of biological role, acyltransferase; part of the gene cluster that mediates the biosynthesis of squalestatin S1 (SQS1, also known as zaragozic acid A), a heavily oxidized fungal polyketide that offers potent cholesterol lowering activity by targeting squalene synthase (SS). SQS1 is composed of a 2,8-dioxobicyclic[3.2.1]octane-3,4,5-tricarboxyclic acid core that is connected to two lipophilic polyketide arms. These initial steps feature the priming of an unusual benzoic acid starter unit onto the highly reducing polyketide synthase clz14, followed by oxaloacetate extension and product release to generate a tricarboxylic acid containing product. The phenylalanine ammonia lyase (PAL) clz10 and the acyl-CoA ligase clz12 are involved in transforming phenylalanine into benzoyl-CoA. The citrate synthase-like protein clz17 is involved in connecting the C-alpha-carbons of the hexaketide chain and oxaloacetate to afford the tricarboxylic acid unit. The potential hydrolytic enzymes, clz11 and clz13, are in close proximity to pks2 and may participate in product release. On the other side, the tetraketide arm is synthesized by a the squalestatin tetraketide synthase clz2 and enzymatically esterified to the core in the last biosynthetic step, by the acetyltransferase clz6. The biosynthesis of the tetraketide must involve 3 rounds of chain extension. After the first and second rounds methyl-transfer occurs, and in all rounds of extension the ketoreductase and dehydratase are active. The enoyl reductase and C-MeT of clz2 are not active in the final round of extension. The acetyltransferase clz6 appears to have a broad substrate selectivity for its acyl CoA substrate, allowing the in vitro synthesis of novel squalestatins. The biosynthesis of SQS1 requires several oxidative steps likely performed by oxidoreductases clz3, clz15 and clz16. Finally, in support of the identification of the cluster as being responsible for SQS1 production, the cluster contains a gene encoding a putative squalene synthase (SS) clz20, suggesting a likely mechanism for self-resistance. The protein is Acyltransferase clz6 of Cochliobolus lunatus (Filamentous fungus).